A 191-amino-acid polypeptide reads, in one-letter code: Retinin (191 aa).

Residues 1-21 (MSRLFLPVLAIVLVSIGASHT) form the signal peptide. The segment at 52-88 (LADGSSGSVSSSAAQPEDQSQEEAEEQQVSSASSGSA) is disordered. Composition is skewed to low complexity over residues 55-69 (GSSG…QPED) and 78-88 (QQVSSASSGSA).

Phosphorylated. In terms of tissue distribution, specifically expressed in cornea (at protein level). Detected in retina and cortex.

Its subcellular location is the secreted. In Drosophila melanogaster (Fruit fly), this protein is Retinin.